We begin with the raw amino-acid sequence, 84 residues long: MARENKKDLIGKVVSDKMSKTIVVEIVQRKMHPIYHKYLKVSRRVKAHDEREESRLGDKVRIIESRPISKEKRWMLVEILERSK.

It belongs to the universal ribosomal protein uS17 family. Part of the 30S ribosomal subunit.

One of the primary rRNA binding proteins, it binds specifically to the 5'-end of 16S ribosomal RNA. The sequence is that of Small ribosomal subunit protein uS17 from Borrelia hermsii (strain HS1 / DAH).